We begin with the raw amino-acid sequence, 70 residues long: U2-agatoxin-Ao1a (70 aa).

Residues 1 to 20 (MRAIISLFLISAMVFSMIQA) form the signal peptide. A propeptide spanning residues 21 to 34 (VPEEEGLQLSEDER) is cleaved from the precursor. Cystine bridges form between Cys37–Cys53, Cys44–Cys58, and Cys52–Cys68. Residue Leu69 is modified to Leucine amide.

It belongs to the neurotoxin 01 (U2-agtx) family. As to expression, expressed by the venom gland.

The protein resides in the secreted. Its function is as follows. Insect active toxin causing rapid but reversible paralysis in crickets. No activity shown in mammals. Suppresses the excitatory postsynaptic potentials evoked in lobster neuromuscular synaptic preparations, possibly by blocking the presynaptic calcium channel. Induces instantaneous reversible paralysis when injected into crickets. Does not show effect on mammalian Cav2.1/CACNA1A, Cav2.2/CACNA1B and Cav2.3/CACNA1E. The polypeptide is U2-agatoxin-Ao1a (Agelena orientalis (Funnel-web spider)).